Reading from the N-terminus, the 133-residue chain is Ribosome-binding factor A (133 aa).

This sequence belongs to the RbfA family. As to quaternary structure, monomer. Binds 30S ribosomal subunits, but not 50S ribosomal subunits or 70S ribosomes.

The protein localises to the cytoplasm. Functionally, one of several proteins that assist in the late maturation steps of the functional core of the 30S ribosomal subunit. Associates with free 30S ribosomal subunits (but not with 30S subunits that are part of 70S ribosomes or polysomes). Required for efficient processing of 16S rRNA. May interact with the 5'-terminal helix region of 16S rRNA. In Citrobacter koseri (strain ATCC BAA-895 / CDC 4225-83 / SGSC4696), this protein is Ribosome-binding factor A.